We begin with the raw amino-acid sequence, 155 residues long: Ribosome maturation factor RimP (155 aa).

Belongs to the RimP family.

It is found in the cytoplasm. Its function is as follows. Required for maturation of 30S ribosomal subunits. This chain is Ribosome maturation factor RimP, found in Prochlorococcus marinus (strain MIT 9515).